We begin with the raw amino-acid sequence, 84 residues long: Cell division topological specificity factor (84 aa).

This sequence belongs to the MinE family.

In terms of biological role, prevents the cell division inhibition by proteins MinC and MinD at internal division sites while permitting inhibition at polar sites. This ensures cell division at the proper site by restricting the formation of a division septum at the midpoint of the long axis of the cell. This Cupriavidus pinatubonensis (strain JMP 134 / LMG 1197) (Cupriavidus necator (strain JMP 134)) protein is Cell division topological specificity factor.